Reading from the N-terminus, the 66-residue chain is Large ribosomal subunit protein uL29 (66 aa).

This sequence belongs to the universal ribosomal protein uL29 family.

This Bacillus anthracis (strain CDC 684 / NRRL 3495) protein is Large ribosomal subunit protein uL29.